We begin with the raw amino-acid sequence, 146 residues long: Molybdopterin synthase catalytic subunit (146 aa).

Substrate is bound by residues 35-37, 99-100, Lys-115, and 122-124; these read LVR, HR, and KKE.

Belongs to the MoaE family. As to quaternary structure, heterotetramer of 2 MoaD subunits and 2 MoaE subunits. Also stable as homodimer. The enzyme changes between these two forms during catalysis.

The enzyme catalyses 2 [molybdopterin-synthase sulfur-carrier protein]-C-terminal-Gly-aminoethanethioate + cyclic pyranopterin phosphate + H2O = molybdopterin + 2 [molybdopterin-synthase sulfur-carrier protein]-C-terminal Gly-Gly + 2 H(+). It participates in cofactor biosynthesis; molybdopterin biosynthesis. Converts molybdopterin precursor Z into molybdopterin. This requires the incorporation of two sulfur atoms into precursor Z to generate a dithiolene group. The sulfur is provided by MoaD. This chain is Molybdopterin synthase catalytic subunit (moaE), found in Cereibacter sphaeroides (strain ATCC 17023 / DSM 158 / JCM 6121 / CCUG 31486 / LMG 2827 / NBRC 12203 / NCIMB 8253 / ATH 2.4.1.) (Rhodobacter sphaeroides).